The sequence spans 366 residues: Protein sigma-NS (366 aa).

The tract at residues 1–11 (MASSLRAAISK) is important for ssRNA-binding and formation of complexes.

Belongs to the orthoreovirus sigma-NS protein family. In terms of assembly, homooligomer; in presence of RNA. Interacts with protein mu-NS; this interaction allows the localization of sigma-NS to the viral factories. Interacts with host G3BP1 (via C-terminus); this interaction induces the relocalization of G3BP1 and other SG proteins to the viral factories periphery.

Its subcellular location is the host cytoplasm. In terms of biological role, protein that binds to ssRNA and participates with protein mu-NS in forming the matrix of viral factories, which are large inclusions in the host cytoplasm where replication intermediates are assembled and viral RNA replication takes place. Plays a role in the inhibition of the integrated stress response (ISR) to escape from host cell translational shutoff. Participates in the disruption of stress granules (SG) through its association with host G3BP1 and mu-NS. The protein is Protein sigma-NS (S3) of Mammalia (T3D).